The chain runs to 719 residues: Photosystem I P700 chlorophyll a apoprotein A1 (719 aa).

The next 8 helical transmembrane spans lie at 59–82 (VFSA…FHGA), 145–168 (LYCT…FHYH), 184–208 (LNHH…HVSL), 280–298 (TAHH…GHMY), 335–358 (WHAQ…HHMY), 374–400 (LSLF…IFMV), 422–444 (AIVS…LYIH), and 520–538 (FLVH…LILL). Residues cysteine 562 and cysteine 571 each contribute to the [4Fe-4S] cluster site. Transmembrane regions (helical) follow at residues 578–599 (HVFL…HFSW) and 653–675 (LSAY…MFLF). Histidine 664 provides a ligand contact to chlorophyll a'. Chlorophyll a-binding residues include methionine 672 and tyrosine 680. Tryptophan 681 contacts phylloquinone. The chain crosses the membrane as a helical span at residues 713-719 (AVGVAHY).

The protein belongs to the PsaA/PsaB family. The PsaA/B heterodimer binds the P700 chlorophyll special pair and subsequent electron acceptors. PSI consists of a core antenna complex that captures photons, and an electron transfer chain that converts photonic excitation into a charge separation. The eukaryotic PSI reaction center is composed of at least 11 subunits. Requires P700 is a chlorophyll a/chlorophyll a' dimer, A0 is one or more chlorophyll a, A1 is one or both phylloquinones and FX is a shared 4Fe-4S iron-sulfur center. as cofactor.

It localises to the plastid. It is found in the chloroplast thylakoid membrane. The enzyme catalyses reduced [plastocyanin] + hnu + oxidized [2Fe-2S]-[ferredoxin] = oxidized [plastocyanin] + reduced [2Fe-2S]-[ferredoxin]. PsaA and PsaB bind P700, the primary electron donor of photosystem I (PSI), as well as the electron acceptors A0, A1 and FX. PSI is a plastocyanin-ferredoxin oxidoreductase, converting photonic excitation into a charge separation, which transfers an electron from the donor P700 chlorophyll pair to the spectroscopically characterized acceptors A0, A1, FX, FA and FB in turn. Oxidized P700 is reduced on the lumenal side of the thylakoid membrane by plastocyanin. This chain is Photosystem I P700 chlorophyll a apoprotein A1, found in Encephalartos lebomboensis (Lebombo cycad).